Reading from the N-terminus, the 301-residue chain is Fluoroquinolones export ATP-binding protein MT2762 (301 aa).

The ABC transporter domain occupies 18-246; sequence IRVRGLTFRY…RSRRRVRVEY (229 aa). 52–59 lines the ATP pocket; the sequence is GPSGAGKS.

Belongs to the ABC transporter superfamily. The complex is composed of 2 ATP-binding proteins and 2 transmembrane proteins.

The protein resides in the cell membrane. Part of the ABC transporter complex involved in fluoroquinolones export. Probably responsible for energy coupling to the transport system. The chain is Fluoroquinolones export ATP-binding protein MT2762 from Mycobacterium tuberculosis (strain CDC 1551 / Oshkosh).